The primary structure comprises 1498 residues: Golgin subfamily A member 3 (1498 aa).

An N-acetylmethionine modification is found at Met-1. The interval 1-118 (MDGASAEQDG…GTSAEGSVRK (118 aa)) is disordered. The residue at position 18 (Ser-18) is a Phosphoserine. Over residues 27–36 (PLKPPGPLVP) the composition is skewed to pro residues. At Ser-57 the chain carries Phosphoserine. The span at 71-81 (PTPPFPDPPSS) shows a compositional bias: pro residues. The interaction with GOPC stretch occupies residues 121–141 (LQSLRLSLPMQETQLCSTDSP). Disordered stretches follow at residues 166–195 (RVKR…MLNP) and 216–325 (SVPR…SAST). The segment at 172–257 (ERSSQPATKT…DYRTEDSNAG (86 aa)) is golgi-targeting domain. Polar residues-rich tracts occupy residues 173–184 (RSSQPATKTRLF) and 269–291 (TKGS…SLSP). Ser-272 carries the phosphoserine modification. The span at 315-324 (SDSSSYSSAS) shows a compositional bias: low complexity. Residues Ser-385, Ser-389, and Ser-465 each carry the phosphoserine modification. A coiled-coil region spans residues 394 to 1459 (VSLESSAAET…ALTVHESLSS (1066 aa)). Over residues 789 to 801 (KEELDRGARRLEE) the composition is skewed to basic and acidic residues. Disordered stretches follow at residues 789–809 (KEEL…TSET), 974–993 (QKQK…KEMK), 1376–1400 (RGAA…PIKI), and 1440–1498 (DSLQ…GPGE). Residue Ser-983 is modified to Phosphoserine. Residues 1376-1387 (RGAAKTRKEPKG) show a composition bias toward basic and acidic residues. Residue Ser-1392 is modified to Phosphoserine. The segment covering 1440-1452 (DSLQRQMEEHALT) has biased composition (basic and acidic residues).

In terms of assembly, homodimer. Interacts with GOLGA7. Isoform 1 interacts with GOPC while isoform 3 does not. Cleaved by caspases in apoptotic cells. As to expression, expressed in all tissues tested. Expressed in liver, testis, lung, heart, salivary gland and kidney.

It is found in the cytoplasm. The protein resides in the golgi apparatus. The protein localises to the golgi stack membrane. Its function is as follows. Golgi auto-antigen; probably involved in maintaining Golgi structure. This Homo sapiens (Human) protein is Golgin subfamily A member 3 (GOLGA3).